Consider the following 333-residue polypeptide: MLKLIQNNREITALIAILCLFGLLSVIDHQYFSLQTVTLVFSSAQILILLAMGATLVMLTRNIDVSVGSIAGLCAVIMGMSLNAGFSLSVSCLLTLLLGMCAGFFNGALVTWLKIPAIVTTLGTLGLYRGLMLLLTDGKWIEGLPDELKRLSAPLWLNISPIGWLLMILILAMAWILAKTPFGRSFYATGDNLQGARQLGVRTDSIQIIAFSVNGVMAALAGIVFASQIGFIPNQTGSGLEMRAIAACVLGGISLLGGTGTVIGAILGAFFLTQINSGLVLLKLPAWWNDFIAGFVLLAVLIFDGRLRCAIEKNIRQQKYARFLKNDKSNQVT.

9 helical membrane passes run 14-34, 39-59, 70-90, 93-113, 115-135, 157-177, 206-226, 252-272, and 284-304; these read LIAILCLFGLLSVIDHQYFSL, LVFSSAQILILLAMGATLVML, IAGLCAVIMGMSLNAGFSLSV, LLTLLLGMCAGFFNGALVTWL, IPAIVTTLGTLGLYRGLMLLL, LNISPIGWLLMILILAMAWIL, IQIIAFSVNGVMAALAGIVFA, GISLLGGTGTVIGAILGAFFL, and LPAWWNDFIAGFVLLAVLIFD.

Belongs to the binding-protein-dependent transport system permease family. AraH/RbsC subfamily. In terms of assembly, the complex is composed of two ATP-binding proteins (LsrA), two transmembrane proteins (LsrC and LsrD) and a solute-binding protein (LsrB).

The protein localises to the cell inner membrane. Functionally, part of the ABC transporter complex LsrABCD involved in autoinducer 2 (AI-2) import. Probably responsible for the translocation of the substrate across the membrane. The chain is Autoinducer 2 import system permease protein LsrC (lsrC) from Photorhabdus laumondii subsp. laumondii (strain DSM 15139 / CIP 105565 / TT01) (Photorhabdus luminescens subsp. laumondii).